The sequence spans 325 residues: Ribose-phosphate pyrophosphokinase (325 aa).

ATP contacts are provided by residues 45–47 and 104–105; these read NGE and RQ. Positions 138 and 178 each coordinate Mg(2+). Residue lysine 202 is part of the active site. Residues arginine 204, aspartate 230, and 234–238 each bind D-ribose 5-phosphate; that span reads DTGGT.

The protein belongs to the ribose-phosphate pyrophosphokinase family. Class I subfamily. In terms of assembly, homohexamer. The cofactor is Mg(2+).

The protein resides in the cytoplasm. It catalyses the reaction D-ribose 5-phosphate + ATP = 5-phospho-alpha-D-ribose 1-diphosphate + AMP + H(+). Its pathway is metabolic intermediate biosynthesis; 5-phospho-alpha-D-ribose 1-diphosphate biosynthesis; 5-phospho-alpha-D-ribose 1-diphosphate from D-ribose 5-phosphate (route I): step 1/1. In terms of biological role, involved in the biosynthesis of the central metabolite phospho-alpha-D-ribosyl-1-pyrophosphate (PRPP) via the transfer of pyrophosphoryl group from ATP to 1-hydroxyl of ribose-5-phosphate (Rib-5-P). The chain is Ribose-phosphate pyrophosphokinase from Corynebacterium efficiens (strain DSM 44549 / YS-314 / AJ 12310 / JCM 11189 / NBRC 100395).